A 1039-amino-acid polypeptide reads, in one-letter code: Probable calcium-transporting ATPase 9, plasma membrane-type (1039 aa).

At Met-1 to Thr-175 the chain is on the cytoplasmic side. The next 2 membrane-spanning stretches (helical) occupy residues Leu-176 to Trp-196 and Gly-199 to Val-219. Topologically, residues Ser-220–Lys-250 are cytoplasmic. Helical transmembrane passes span Ile-251–Pro-271 and Val-353–Leu-373. The Cytoplasmic segment spans residues Val-374–Thr-406. Residues Ile-407–Ala-427 traverse the membrane as a helical segment. The 4-aspartylphosphate intermediate role is filled by Asp-456. 2 residues coordinate Mg(2+): Asp-758 and Asp-762. The chain crosses the membrane as a helical span at residues Ile-825–Ala-845. Topologically, residues Val-846 to Gln-847 are cytoplasmic. A run of 2 helical transmembrane segments spans residues Leu-848–Pro-868 and Asn-892–Glu-912. The Cytoplasmic segment spans residues Arg-913 to Asn-960. The next 2 membrane-spanning stretches (helical) occupy residues Trp-961–Leu-981 and Trp-995–Ile-1015. Topologically, residues Pro-1016–Ile-1039 are cytoplasmic.

Belongs to the cation transport ATPase (P-type) (TC 3.A.3) family. Type IIB subfamily.

The protein resides in the membrane. The enzyme catalyses Ca(2+)(in) + ATP + H2O = Ca(2+)(out) + ADP + phosphate + H(+). With respect to regulation, activated by calmodulin. This magnesium-dependent enzyme catalyzes the hydrolysis of ATP coupled with the translocation of calcium from the cytosol out of the cell, into the endoplasmic reticulum, or into organelles. The sequence is that of Probable calcium-transporting ATPase 9, plasma membrane-type from Oryza sativa subsp. japonica (Rice).